The primary structure comprises 135 residues: Actin-related protein 2/3 complex subunit 5B (135 aa).

This sequence belongs to the ARPC5 family. As to quaternary structure, component of the Arp2/3 complex composed of ARP2, ARP3, ARPC1/p41-ARC, ARPC2/p34-ARC, ARPC3/p21-ARC, ARPC4/p20-ARC and ARPC5/p16-ARC.

It localises to the cytoplasm. The protein resides in the cytoskeleton. Its subcellular location is the cell projection. Functionally, functions as a component of the Arp2/3 complex which is involved in regulation of actin polymerization and together with an activating nucleation-promoting factor (NPF) mediates the formation of branched actin networks. Arp2/3 complex plays a critical role in the control of cell morphogenesis via the modulation of cell polarity development. The sequence is that of Actin-related protein 2/3 complex subunit 5B (ARPC5B) from Arabidopsis thaliana (Mouse-ear cress).